Here is a 629-residue protein sequence, read N- to C-terminus: Hemocyanin F chain (629 aa).

His-172, His-176, His-203, His-324, His-328, and His-364 together coordinate Cu cation. Residues Asn-395 and Asn-447 are each glycosylated (N-linked (GlcNAc...) asparagine). Residues 503-513 are compositionally biased toward polar residues; it reads SESSVTVSHTP. Positions 503 to 522 are disordered; that stretch reads SESSVTVSHTPTFEELQRGE. An N-linked (GlcNAc...) asparagine glycan is attached at Asn-527. Residues Cys-534 and Cys-582 are joined by a disulfide bond. Asn-615 carries N-linked (GlcNAc...) asparagine glycosylation.

The protein belongs to the tyrosinase family. Hemocyanin subfamily. As to quaternary structure, tarantula hemocyanin is a 24-chain polymer with seven different chains identified. As to expression, hemolymph.

It is found in the secreted. The protein localises to the extracellular space. Hemocyanins are copper-containing oxygen carriers occurring freely dissolved in the hemolymph of many mollusks and arthropods. The sequence is that of Hemocyanin F chain (HCF) from Aphonopelma sp. (American tarantula).